The primary structure comprises 61 residues: Metallothionein-2 (61 aa).

An N-acetylmethionine modification is found at methionine 1. A beta region spans residues 1–29; it reads MDPNCSCTAGESCTCAGSCKCKDCKCASC. Residues cysteine 5, cysteine 7, cysteine 13, cysteine 15, cysteine 19, cysteine 21, cysteine 24, cysteine 26, cysteine 29, cysteine 33, cysteine 34, cysteine 36, cysteine 37, cysteine 41, cysteine 44, cysteine 48, cysteine 50, and cysteine 57 each contribute to the a divalent metal cation site. The interval 30 to 61 is alpha; sequence KKSCCSCCPVGCAKCAQGCVCKGASDKCSCCA. Residue serine 58 is modified to Phosphoserine. A divalent metal cation is bound by residues cysteine 59 and cysteine 60.

The protein belongs to the metallothionein superfamily. Type 1 family. In terms of assembly, interacts with EOLA1.

Metallothioneins have a high content of cysteine residues that bind various heavy metals; these proteins are transcriptionally regulated by both heavy metals and glucocorticoids. The chain is Metallothionein-2 (MT2A) from Ovis aries (Sheep).